We begin with the raw amino-acid sequence, 221 residues long: Cytidylate kinase (221 aa).

Residue 11–19 (GPSGVGKST) coordinates ATP.

This sequence belongs to the cytidylate kinase family. Type 1 subfamily.

Its subcellular location is the cytoplasm. It carries out the reaction CMP + ATP = CDP + ADP. The enzyme catalyses dCMP + ATP = dCDP + ADP. The chain is Cytidylate kinase from Mycoplasmopsis pulmonis (strain UAB CTIP) (Mycoplasma pulmonis).